Here is a 345-residue protein sequence, read N- to C-terminus: Glycosyltransferase 1 domain-containing protein 1 (345 aa).

The first 19 residues, 1–19, serve as a signal peptide directing secretion; it reads MKILFLACLRAHTGNSTTA. Residues Asn246 and Asn322 are each glycosylated (N-linked (GlcNAc...) asparagine).

Belongs to the glycosyltransferase group 1 family. Glycosyltransferase 4 subfamily.

The protein localises to the secreted. The sequence is that of Glycosyltransferase 1 domain-containing protein 1 (glt1d1) from Xenopus tropicalis (Western clawed frog).